The following is a 418-amino-acid chain: Vacuole membrane protein HFL1 (418 aa).

The Extracellular portion of the chain corresponds to 1–5; the sequence is MENKL. A helical membrane pass occupies residues 6 to 26; the sequence is LCWWLYWPCVYSSIIATIISF. At 27-43 the chain is on the cytoplasmic side; it reads YTITRHLLNYRKPYEQR. A helical transmembrane segment spans residues 44 to 64; sequence LSIRILLLVPIFSVSCASGII. Residues 65 to 78 are Extracellular-facing; it reads KPEAAQFYVDPIRE. Residues 79–99 form a helical membrane-spanning segment; that stretch reads FYEAFVIYTFFTFLTLLLGGE. The Cytoplasmic portion of the chain corresponds to 100–141; sequence RNIITVLSLNHAPTRHPIPLIGKICKPIDLSDPFDFLFVKKG. A helical transmembrane segment spans residues 142 to 162; that stretch reads ILQYVWFKPFYCFGTLICSAW. Topologically, residues 163–168 are extracellular; sequence KLPKFE. A helical membrane pass occupies residues 169 to 189; that stretch reads IFLNVFYNISVTWSLYSLALF. Residues 190-205 are Cytoplasmic-facing; the sequence is WKCLYPELTPYKPWLK. Residues 206–226 form a helical membrane-spanning segment; it reads FLCVKLIIFASYWQSIIIQGL. At 227–246 the chain is on the extracellular side; the sequence is VVTGKLGTGNQDRTSGYVYK. The helical transmembrane segment at 247 to 267 threads the bilayer; it reads NGLLCIEMVPFAILHAVAFPW. The Cytoplasmic segment spans residues 268–418; the sequence is NKYTAFSIPY…DVQSRSSMAC (151 aa). Positions 379 to 402 are ATG8-interacting region; that stretch reads RTFPEDPNYPVVHDYTMGHRYSRS.

It belongs to the TMEM184 family. In terms of assembly, interacts with ATG8.

The protein localises to the vacuole membrane. Functionally, vacuole membrane protein that recruits ATG8 to facilitate the degradation of vacuolar integral membrane proteins during early-stationary vacuole turnover (EVT) when cells enter stationary phase. This chain is Vacuole membrane protein HFL1, found in Saccharomyces cerevisiae (strain ATCC 204508 / S288c) (Baker's yeast).